The following is a 334-amino-acid chain: Cytoskeleton protein RodZ (334 aa).

The Cytoplasmic portion of the chain corresponds to 1 to 111; it reads MNTEATHDQN…LGKRRKKRDG (111 aa). Positions 19 to 71 constitute an HTH cro/C1-type domain; it reads LRNAREQLGLSQQAVAERLCLKVSTVRDIEEDKAPSDLASTFLRGYIRSYARL. Positions 30–49 form a DNA-binding region, H-T-H motif; sequence QQAVAERLCLKVSTVRDIEE. A helical; Signal-anchor for type II membrane protein membrane pass occupies residues 112-132; it reads WLMSFTWLVLFVVVGLTGAWW. The Periplasmic segment spans residues 133-334; it reads WQNHKAQQEE…TLNAEPTPAQ (202 aa). The segment at 154-241 is disordered; the sequence is LNADKDSGQS…PSALPTSQAG (88 aa). 2 stretches are compositionally biased toward low complexity: residues 176–211 and 219–241; these read TTPA…TVVA and TAAT…SQAG.

It belongs to the RodZ family.

It localises to the cell inner membrane. Cytoskeletal protein that is involved in cell-shape control through regulation of the length of the long axis. This chain is Cytoskeleton protein RodZ, found in Salmonella choleraesuis (strain SC-B67).